Reading from the N-terminus, the 87-residue chain is Small ribosomal subunit protein uS17 (87 aa).

It belongs to the universal ribosomal protein uS17 family. In terms of assembly, part of the 30S ribosomal subunit.

In terms of biological role, one of the primary rRNA binding proteins, it binds specifically to the 5'-end of 16S ribosomal RNA. The chain is Small ribosomal subunit protein uS17 from Geobacillus thermodenitrificans (strain NG80-2).